A 162-amino-acid chain; its full sequence is Ribose-5-phosphate isomerase B (162 aa).

D-ribulose 5-phosphate-binding positions include 11-12 (DH) and 70-74 (GSGNG). The active-site Proton acceptor is the E75. The Proton donor role is filled by H102. The D-ribulose 5-phosphate site is built by N103, R113, R137, and R141.

This sequence belongs to the LacAB/RpiB family. Homodimer.

The enzyme catalyses aldehydo-D-ribose 5-phosphate = D-ribulose 5-phosphate. It functions in the pathway carbohydrate degradation; pentose phosphate pathway; D-ribose 5-phosphate from D-ribulose 5-phosphate (non-oxidative stage): step 1/1. Its function is as follows. Catalyzes the interconversion of ribulose-5-P and ribose-5-P. The sequence is that of Ribose-5-phosphate isomerase B from Mycobacterium leprae (strain TN).